A 173-amino-acid chain; its full sequence is Crossover junction endodeoxyribonuclease RuvC (173 aa).

Catalysis depends on residues aspartate 8, glutamate 67, and aspartate 139. Mg(2+) contacts are provided by aspartate 8, glutamate 67, and aspartate 139.

This sequence belongs to the RuvC family. Homodimer which binds Holliday junction (HJ) DNA. The HJ becomes 2-fold symmetrical on binding to RuvC with unstacked arms; it has a different conformation from HJ DNA in complex with RuvA. In the full resolvosome a probable DNA-RuvA(4)-RuvB(12)-RuvC(2) complex forms which resolves the HJ. Mg(2+) is required as a cofactor.

The protein localises to the cytoplasm. The enzyme catalyses Endonucleolytic cleavage at a junction such as a reciprocal single-stranded crossover between two homologous DNA duplexes (Holliday junction).. Its function is as follows. The RuvA-RuvB-RuvC complex processes Holliday junction (HJ) DNA during genetic recombination and DNA repair. Endonuclease that resolves HJ intermediates. Cleaves cruciform DNA by making single-stranded nicks across the HJ at symmetrical positions within the homologous arms, yielding a 5'-phosphate and a 3'-hydroxyl group; requires a central core of homology in the junction. The consensus cleavage sequence is 5'-(A/T)TT(C/G)-3'. Cleavage occurs on the 3'-side of the TT dinucleotide at the point of strand exchange. HJ branch migration catalyzed by RuvA-RuvB allows RuvC to scan DNA until it finds its consensus sequence, where it cleaves and resolves the cruciform DNA. In Vibrio atlanticus (strain LGP32) (Vibrio splendidus (strain Mel32)), this protein is Crossover junction endodeoxyribonuclease RuvC.